The chain runs to 459 residues: Cysteine--tRNA ligase (459 aa).

C28 provides a ligand contact to Zn(2+). The 'HIGH' region motif lies at 30–40; sequence ITIYDLCHIGH. C209, H234, and E238 together coordinate Zn(2+). The 'KMSKS' region motif lies at 266 to 270; the sequence is KMSKS. K269 lines the ATP pocket.

The protein belongs to the class-I aminoacyl-tRNA synthetase family. Monomer. Zn(2+) serves as cofactor.

Its subcellular location is the cytoplasm. It catalyses the reaction tRNA(Cys) + L-cysteine + ATP = L-cysteinyl-tRNA(Cys) + AMP + diphosphate. The chain is Cysteine--tRNA ligase from Shewanella woodyi (strain ATCC 51908 / MS32).